Consider the following 148-residue polypeptide: Nucleoside diphosphate kinase B (148 aa).

6 residues coordinate ATP: Lys9, Phe57, Arg85, Thr91, Arg102, and Asn112. The Pros-phosphohistidine intermediate role is filled by His115.

It belongs to the NDK family. Mg(2+) is required as a cofactor.

The catalysed reaction is a 2'-deoxyribonucleoside 5'-diphosphate + ATP = a 2'-deoxyribonucleoside 5'-triphosphate + ADP. The enzyme catalyses a ribonucleoside 5'-diphosphate + ATP = a ribonucleoside 5'-triphosphate + ADP. Functionally, major role in the synthesis of nucleoside triphosphates other than ATP. The ATP gamma phosphate is transferred to the NDP beta phosphate via a ping-pong mechanism, using a phosphorylated active-site intermediate. This is Nucleoside diphosphate kinase B from Flaveria bidentis (Coastal plain yellowtops).